We begin with the raw amino-acid sequence, 189 residues long: Hypoxanthine/guanine phosphoribosyltransferase (189 aa).

It belongs to the purine/pyrimidine phosphoribosyltransferase family. Archaeal HPRT subfamily. Homodimer.

It is found in the cytoplasm. The catalysed reaction is IMP + diphosphate = hypoxanthine + 5-phospho-alpha-D-ribose 1-diphosphate. The enzyme catalyses GMP + diphosphate = guanine + 5-phospho-alpha-D-ribose 1-diphosphate. It functions in the pathway purine metabolism; IMP biosynthesis via salvage pathway; IMP from hypoxanthine: step 1/1. Its function is as follows. Catalyzes a salvage reaction resulting in the formation of IMP that is energically less costly than de novo synthesis. This Methanothermus fervidus (strain ATCC 43054 / DSM 2088 / JCM 10308 / V24 S) protein is Hypoxanthine/guanine phosphoribosyltransferase.